Here is a 311-residue protein sequence, read N- to C-terminus: Aldose reductase B (311 aa).

13–23 (DIHHIPMIGLG) contacts NADP(+). Tyr54 acts as the Proton donor in catalysis. His116 serves as a coordination point for substrate. 219–273 (SPLGQGKCDLLSNETLKSIADKHNKTVANVIFKWLNQRGIVTIPKSSNPARIIEN) is an NADP(+) binding site.

The protein belongs to the aldo/keto reductase family.

It carries out the reaction an alditol + NAD(+) = an aldose + NADH + H(+). The catalysed reaction is an alditol + NADP(+) = an aldose + NADPH + H(+). In terms of biological role, catalyzes the NADPH-dependent reduction of a wide variety of carbonyl-containing compounds to their corresponding alcohols with a broad range of catalytic efficiencies. The protein is Aldose reductase B (alrB) of Dictyostelium discoideum (Social amoeba).